The primary structure comprises 631 residues: Phosphomethylpyrimidine synthase (631 aa).

Substrate contacts are provided by residues Asn-239, Met-268, Tyr-297, His-333, 353-355 (SRG), 394-397 (DGLR), and Glu-433. His-437 serves as a coordination point for Zn(2+). Substrate is bound at residue Tyr-460. His-501 provides a ligand contact to Zn(2+). [4Fe-4S] cluster-binding residues include Cys-581, Cys-584, and Cys-589.

The protein belongs to the ThiC family. As to quaternary structure, homodimer. [4Fe-4S] cluster is required as a cofactor.

The catalysed reaction is 5-amino-1-(5-phospho-beta-D-ribosyl)imidazole + S-adenosyl-L-methionine = 4-amino-2-methyl-5-(phosphooxymethyl)pyrimidine + CO + 5'-deoxyadenosine + formate + L-methionine + 3 H(+). It functions in the pathway cofactor biosynthesis; thiamine diphosphate biosynthesis. Functionally, catalyzes the synthesis of the hydroxymethylpyrimidine phosphate (HMP-P) moiety of thiamine from aminoimidazole ribotide (AIR) in a radical S-adenosyl-L-methionine (SAM)-dependent reaction. This chain is Phosphomethylpyrimidine synthase, found in Escherichia coli O6:H1 (strain CFT073 / ATCC 700928 / UPEC).